A 429-amino-acid chain; its full sequence is Ribosomal RNA small subunit methyltransferase B (429 aa).

Residues 254–260 (CAAPGGK), aspartate 277, aspartate 303, and aspartate 322 contribute to the S-adenosyl-L-methionine site. Cysteine 375 acts as the Nucleophile in catalysis.

It belongs to the class I-like SAM-binding methyltransferase superfamily. RsmB/NOP family.

Its subcellular location is the cytoplasm. The catalysed reaction is cytidine(967) in 16S rRNA + S-adenosyl-L-methionine = 5-methylcytidine(967) in 16S rRNA + S-adenosyl-L-homocysteine + H(+). Its function is as follows. Specifically methylates the cytosine at position 967 (m5C967) of 16S rRNA. This chain is Ribosomal RNA small subunit methyltransferase B, found in Erwinia tasmaniensis (strain DSM 17950 / CFBP 7177 / CIP 109463 / NCPPB 4357 / Et1/99).